The chain runs to 39 residues: Omega-theraphotoxin-Ba1a (39 aa).

3 disulfide bridges follow: C4-C25, C8-C31, and C17-C36.

It belongs to the neurotoxin 12 (Hwtx-2) family. 06 (TXP1) subfamily. In terms of tissue distribution, expressed by the venom gland.

It localises to the secreted. Functionally, inhibits voltage-gated calcium channels (Cav) in rat cerebellar granule cells. Has insecticidal activity to crickets (Acheta domesticus). Is not toxic to mice. The sequence is that of Omega-theraphotoxin-Ba1a from Brachypelma albiceps (Mexican golden redrump tarantula).